The following is a 266-amino-acid chain: NAD kinase 1 (266 aa).

Aspartate 45 (proton acceptor) is an active-site residue. Residues 45-46, 122-123, and arginine 148 each bind NAD(+); these read DG and NE. Residue aspartate 150 participates in ATP binding. Residues serine 158 and 161 to 166 each bind NAD(+); that span reads TAYNKA.

Belongs to the NAD kinase family. Homodimer. The cofactor is Ca(2+). Requires Mn(2+) as cofactor.

It localises to the cytoplasm. The catalysed reaction is NAD(+) + ATP = ADP + NADP(+) + H(+). With respect to regulation, allosterically inhibited by NADP and activated by quinolinic acid. Strongly inhibited by HgCl(2). In terms of biological role, involved in the regulation of the intracellular balance of NAD and NADP, and is a key enzyme in the biosynthesis of NADP. Catalyzes specifically the phosphorylation on 2'-hydroxyl of the adenosine moiety of NAD to yield NADP. It can use ATP and other nucleoside triphosphates (GTP, UTP) as well as inorganic polyphosphate (poly(P)) as a source of phosphorus. This Bacillus subtilis (strain 168) protein is NAD kinase 1 (ppnKA).